Consider the following 296-residue polypeptide: Probable endonuclease 4 (296 aa).

Zn(2+) is bound by residues His68, His109, Glu144, Asp178, His181, His213, Asp226, His228, and Glu258.

It belongs to the AP endonuclease 2 family. Zn(2+) is required as a cofactor.

It catalyses the reaction Endonucleolytic cleavage to 5'-phosphooligonucleotide end-products.. Functionally, endonuclease IV plays a role in DNA repair. It cleaves phosphodiester bonds at apurinic or apyrimidinic (AP) sites, generating a 3'-hydroxyl group and a 5'-terminal sugar phosphate. The polypeptide is Probable endonuclease 4 (Staphylococcus aureus (strain NCTC 8325 / PS 47)).